A 1205-amino-acid polypeptide reads, in one-letter code: Chromosome partition protein Smc (1205 aa).

Position 32–39 (32–39) interacts with ATP; the sequence is PNGSGKSN. Coiled-coil stretches lie at residues 169–288 and 330–499; these read KHRK…SIQH and EELE…GLQR. In terms of domain architecture, SMC hinge spans 514-628; the sequence is GLFGSIAQLV…VNDLTEAMGL (115 aa). 3 coiled-coil regions span residues 661 to 771, 802 to 836, and 979 to 1033; these read LEVT…AQET, AVRTAEERANAVRGRADSLRRAAAAEREARVRAQQ, and DRVT…KDLL.

The protein belongs to the SMC family. As to quaternary structure, homodimer.

The protein localises to the cytoplasm. Functionally, required for chromosome condensation and partitioning. This Mycobacterium tuberculosis (strain ATCC 25618 / H37Rv) protein is Chromosome partition protein Smc.